A 1788-amino-acid chain; its full sequence is Genome polyprotein (1788 aa).

An interaction with host MAP1LC3A/LC3 region spans residues 1–184; that stretch reads MMMASKDVVA…LCPLPPIDLR (184 aa). Residues 58-68 are compositionally biased toward low complexity; it reads GRTTPEPTGTA. A disordered region spans residues 58–86; it reads GRTTPEPTGTAGPPPKQQRDRPPRTQEEV. The segment covering 74-84 has biased composition (basic and acidic residues); it reads QQRDRPPRTQE. The tract at residues 185-399 is interaction with NTPase; that stretch reads NMEPASEPTI…ASLLPDFHLQ (215 aa). An interaction with NS4 region spans residues 302-399; that stretch reads HPTQSWSQQT…ASLLPDFHLQ (98 aa). Host ER membrane association regions lie at residues 319-350 and 361-399; these read KLEL…KPLN and TFMG…FHLQ. An interaction with NS1-2 and NS4 and homooligomerization region spans residues 400–575; the sequence is GPEDLARDLV…GKTKAAEHLA (176 aa). The region spanning 533–698 is the SF3 helicase domain; the sequence is RISMARSALA…EQIRRVSPGD (166 aa). An ATP-binding site is contributed by 561 to 568; sequence GPPGIGKT. The interval 652 to 757 is important for mitochondrion targeting; sequence AIVITTNAPG…AVALTMERQD (106 aa). The segment at 827-833 is functions as endoplasmic reticulum export signal; that stretch reads YSLESDG. The interval 866-911 is host membrane association; that stretch reads RAVAYASCIQSAITSILQIAGSALVVNRAVKRMFGTRTATLSLEGP. Residues 948–979 form a disordered region; sequence EEVAHTEIPSATMEGKNKGKNKKGRGRRNNYN. Positions 965-975 are enriched in basic residues; sequence KGKNKKGRGRR. Residues 988-993 form an acidic region; it reads DEEYEE. O-(5'-phospho-RNA)-tyrosine is present on Y991. The segment at 1083-1099 is interaction with host EIF4G; that stretch reads WADDEREVDYNEKISFE. The region spanning 1100 to 1280 is the Peptidase C37 domain; it reads APPTLWSRVT…QASEGETTLE (181 aa). Residues H1129, E1153, and C1238 each act as for 3CLpro activity in the active site. The RdRp catalytic domain maps to 1515–1636; sequence KYHFDADYTA…STDIEFDPAK (122 aa). Residues D1519, D1521, D1623, and E1624 each contribute to the Mg(2+) site.

In terms of assembly, homodimer. Homooligomer. Interacts with NTPase; this interaction increases the proapoptotic activity of the NTPase and is crucial for the formation of the viral replication complex. Interacts with NS4; this interaction is crucial for the formation of the viral replication complex. Interacts (via N-terminus) with host VAPA. Interacts with host MAP1LC3A/LC3; this interaction does not seem to be linked to host autophagy, but rather plays a role in the formation of viral factories. Homooligomer. Interacts with NS1-2; this interaction increases the proapoptotic activity of the NTPase and is crucial for the formation of the viral replication complex. Interacts with NS4; this interaction increases the proapoptotic activity of the NTPase. As to quaternary structure, homodimer. Monomer; in solution. In terms of assembly, interacts with NTPase; this interaction increases the proapoptotic activity of the NTPase. Interacts with NS1-2; this interaction is crucial for the formation of the viral replication complex. Monomer. Interacts with the RNA-directed RNA polymerase; this interaction induces the multimerization of the RdRp and enhances its activity. Interacts with host IEF4G1; this interaction plays a role in translation of viral proteins. As to quaternary structure, homohexamer; also forms fibrous hexameric oligomer. Interacts with the viral genome-linked protein; this interaction induces the multimerization of the RdRp and enhances its activity. Requires Mg(2+) as cofactor. Mn(2+) serves as cofactor. Post-translationally, specific enzymatic cleavages in vivo yield mature proteins. 3CLpro is first autocatalytically cleaved, then processes the whole polyprotein. NS1/2-3 and NS3-4 sites are cleaved rapidly and NS4-5, NS5-6, and NS6-7 sites are processed subsequently and less efficiently. VPg is uridylylated by the polymerase and is covalently attached to the 5'-end of the polyadenylated genomic and subgenomic RNAs. This uridylylated form acts as a nucleotide-peptide primer for the polymerase.

Its subcellular location is the host Golgi apparatus membrane. It is found in the host endoplasmic reticulum membrane. It carries out the reaction a ribonucleoside 5'-triphosphate + H2O = a ribonucleoside 5'-diphosphate + phosphate + H(+). The catalysed reaction is Endopeptidase with a preference for cleavage when the P1 position is occupied by Glu-|-Xaa and the P1' position is occupied by Gly-|-Yaa.. The enzyme catalyses RNA(n) + a ribonucleoside 5'-triphosphate = RNA(n+1) + diphosphate. Functionally, induces the proliferation of the host smooth ER membranes forming long tubular structures. These remodeled membranes probably form the viral factories that contain the replication complex. May play a role in viral replication by interacting with host VAPA, a vesicle-associated membrane protein that plays a role in SNARE-mediated vesicle fusion. This interaction may target replication complex to intracellular membranes. Its function is as follows. Displays NTPase activity, but no helicase activity. Induces the formation of convoluted membranes derived from the host ER. These remodeled membranes probably form the viral factories that contain the replication complex. Initiates host cell death by targeting the mitochondrial outer membrane, leading to the permeabilization of mitochondria, programmed host cell death and viral egress. Probably plays a role in preventing the assembly of host stress granules. In terms of biological role, probable key protein responsible for the formation of membrane alterations by the virus. Induces the formation of convoluted membranes derived from the host ER. These remodeled membranes probably form the viral factories that contain the replication complex. May play a role in targeting replication complex to intracellular membranes. Viral genome-linked protein is covalently linked to the 5'-end of the positive-strand, negative-strand genomic RNAs and subgenomic RNA. Acts as a genome-linked replication primer. May recruit ribosome to viral RNA thereby promoting viral proteins translation. Interacts with host translation initiation complex to allow the translation of viral proteins. Induces the formation of aggregates of RNA-directed RNA polymerase in the presence of RNA. Through its interaction with the viral RNA-directed RNA polymerase, plays a crucial role in enhancing the polymerase activity. Functionally, processes the polyprotein. 3CLpro-RdRp is first released by autocleavage, then all other proteins are cleaved. May cleave polyadenylate-binding protein thereby inhibiting cellular translation. Its function is as follows. Replicates genomic and antigenomic RNA by recognizing replications specific signals. Also transcribes a subgenomic mRNA by initiating RNA synthesis internally on antigenomic RNA. This sgRNA codes for structural proteins. Catalyzes the covalent attachment VPg with viral RNAs. This chain is Genome polyprotein, found in Southampton virus (strain GI/Human/United Kingdom/Southampton/1991) (SHV).